Here is a 301-residue protein sequence, read N- to C-terminus: Hydroxymycolate synthase MmaA4 (301 aa).

S-adenosyl-L-methionine-binding positions include 42–43 (YS), 81–83 (GCG), 103–108 (TLSKNQ), 132–133 (WE), and Ile-145. Cys-278 is a catalytic residue.

Belongs to the CFA/CMAS family. As to quaternary structure, monomer.

It participates in lipid metabolism; mycolic acid biosynthesis. Involved in the biosynthesis of hydroxymycolate, a common precursor of oxygenated mycolic acids (methoxymycolate and ketomycolate). Probably transfers a methyl group from the S-adenosylmethionine (SAM) cofactor and, subsequently or simultaneously, a water molecule onto the double bound of ethylene substrates, leading to the formation of the hydroxylated product at the distal position. This is Hydroxymycolate synthase MmaA4 (cmaA) from Mycobacterium bovis (strain ATCC BAA-935 / AF2122/97).